Reading from the N-terminus, the 209-residue chain is Guanylate kinase (209 aa).

Residues 10-189 (GLLLVLSAPS…AFSDLRSVVV (180 aa)) enclose the Guanylate kinase-like domain. 17 to 24 (APSGAGKT) contacts ATP.

The protein belongs to the guanylate kinase family.

The protein localises to the cytoplasm. It carries out the reaction GMP + ATP = GDP + ADP. Functionally, essential for recycling GMP and indirectly, cGMP. The sequence is that of Guanylate kinase from Myxococcus xanthus (strain DK1622).